The primary structure comprises 415 residues: Serine--tRNA ligase (415 aa).

An L-serine-binding site is contributed by 231 to 233 (TAE). 262 to 264 (RSE) contacts ATP. Glu285 contacts L-serine. An ATP-binding site is contributed by 349–352 (EISS). Ser383 provides a ligand contact to L-serine.

The protein belongs to the class-II aminoacyl-tRNA synthetase family. Type-1 seryl-tRNA synthetase subfamily. As to quaternary structure, homodimer. The tRNA molecule binds across the dimer.

Its subcellular location is the cytoplasm. It catalyses the reaction tRNA(Ser) + L-serine + ATP = L-seryl-tRNA(Ser) + AMP + diphosphate + H(+). The catalysed reaction is tRNA(Sec) + L-serine + ATP = L-seryl-tRNA(Sec) + AMP + diphosphate + H(+). Its pathway is aminoacyl-tRNA biosynthesis; selenocysteinyl-tRNA(Sec) biosynthesis; L-seryl-tRNA(Sec) from L-serine and tRNA(Sec): step 1/1. Functionally, catalyzes the attachment of serine to tRNA(Ser). Is also able to aminoacylate tRNA(Sec) with serine, to form the misacylated tRNA L-seryl-tRNA(Sec), which will be further converted into selenocysteinyl-tRNA(Sec). In Helicobacter pylori (strain ATCC 700392 / 26695) (Campylobacter pylori), this protein is Serine--tRNA ligase.